A 290-amino-acid chain; its full sequence is L-fucono-1,5-lactonase (290 aa).

The protein belongs to the metallo-dependent hydrolases superfamily.

The catalysed reaction is L-fucono-1,5-lactone + H2O = L-fuconate + H(+). It catalyses the reaction L-fucono-1,4-lactone + H2O = L-fuconate + H(+). The enzyme catalyses D-arabinono-1,4-lactone + H2O = D-arabinonate + H(+). It carries out the reaction L-xylono-1,4-lactone + H2O = L-xylonate + H(+). The catalysed reaction is L-galactono-1,4-lactone + H2O = L-galactonate + H(+). In terms of biological role, catalyzes the hydrolysis of L-fucono-1,5-lactone to L-fuconate. Can also hydrolyze L-fucono-1,4-lactone, L-galactono-1,4-lactone D-arabinono-1,4-lactone and L-xylono-1,4-lactone. In Burkholderia ambifaria (strain ATCC BAA-244 / DSM 16087 / CCUG 44356 / LMG 19182 / AMMD) (Burkholderia cepacia (strain AMMD)), this protein is L-fucono-1,5-lactonase.